We begin with the raw amino-acid sequence, 181 residues long: Small ribosomal subunit protein cS23 (181 aa).

The interval 1–40 (MLPMSVHPATTPALASRPRVSLPRPSTPSSSSSLVHLKSR) is disordered. Over residues 14-36 (LASRPRVSLPRPSTPSSSSSLVH) the composition is skewed to low complexity.

Belongs to the chloroplast-specific ribosomal protein cS23 family. As to quaternary structure, part of the 30S ribosomal subunit.

The protein localises to the plastid. Its subcellular location is the chloroplast. In terms of biological role, component of the chloroplast ribosome (chloro-ribosome), a dedicated translation machinery responsible for the synthesis of chloroplast genome-encoded proteins, including proteins of the transcription and translation machinery and components of the photosynthetic apparatus. In Hordeum vulgare (Barley), this protein is Small ribosomal subunit protein cS23 (PSRP3).